The chain runs to 225 residues: MRIVFDIGGSVLVPSKPDVEFIDKLSYELTKVSEDHEIAIVVGGGKTAREYIEVASKFNANETFKDYLGIQITRANAMLLIAALKERAYPQVVTDFWEAWKAIQLKKIPVMGGTHPGHTTDAVSALLAEFLGADLLVVITNVDGVYTDDPRKNPNAKKLEKISARELVQIVGKSTSKAGASTVIDPLAASIILRSGIKTYIIGKKDALRLFDVIRGKHEGTTVEP.

An ATP-binding site is contributed by 9 to 10; that stretch reads GS. Position 44 (glycine 44) interacts with UMP. ATP contacts are provided by glycine 45 and arginine 49. UMP-binding positions include aspartate 66 and 114-120; that span reads THPGHTT. Positions 140, 141, 146, and 149 each coordinate ATP.

The protein belongs to the UMP kinase family. As to quaternary structure, homohexamer.

Its subcellular location is the cytoplasm. The enzyme catalyses UMP + ATP = UDP + ADP. It functions in the pathway pyrimidine metabolism; CTP biosynthesis via de novo pathway; UDP from UMP (UMPK route): step 1/1. Inhibited by UTP. Its function is as follows. Catalyzes the reversible phosphorylation of UMP to UDP. In Pyrococcus abyssi (strain GE5 / Orsay), this protein is Uridylate kinase.